Here is a 258-residue protein sequence, read N- to C-terminus: Indole-3-glycerol phosphate synthase (258 aa).

The protein belongs to the TrpC family.

It catalyses the reaction 1-(2-carboxyphenylamino)-1-deoxy-D-ribulose 5-phosphate + H(+) = (1S,2R)-1-C-(indol-3-yl)glycerol 3-phosphate + CO2 + H2O. It functions in the pathway amino-acid biosynthesis; L-tryptophan biosynthesis; L-tryptophan from chorismate: step 4/5. This Chlorobium limicola (strain DSM 245 / NBRC 103803 / 6330) protein is Indole-3-glycerol phosphate synthase.